Reading from the N-terminus, the 102-residue chain is Large ribosomal subunit protein bL36m (102 aa).

The protein belongs to the bacterial ribosomal protein bL36 family. Component of the mitochondrial ribosome large subunit (39S) which comprises a 16S rRNA and about 50 distinct proteins.

Its subcellular location is the mitochondrion. This is Large ribosomal subunit protein bL36m (Mrpl36) from Mus musculus (Mouse).